A 684-amino-acid polypeptide reads, in one-letter code: Fermitin family homolog 2 (684 aa).

Positions 40–81 (HIGGVMLKLVEKLDVKKDWSDHALWWEKKKTWLLKTHWTLDK) are interaction with membranes containing phosphatidylinositol phosphate. Residues 141 to 163 (LRKPRDPKKKKKKLEDAEEETLE) are disordered. The FERM domain maps to 279–577 (DLNPKYDAIR…SLPEFGITHF (299 aa)). A PH domain is found at 378-474 (KVFKPKKLTL…WMAACRLASK (97 aa)). Lys-381 serves as a coordination point for a 1,2-diacyl-sn-glycero-3-phospho-(1D-myo-inositol-3,4,5-trisphosphate).

The protein belongs to the kindlin family.

The protein resides in the cytoplasm. Its subcellular location is the cell cortex. It localises to the cytoskeleton. The protein localises to the stress fiber. It is found in the cell junction. The protein resides in the focal adhesion. Its subcellular location is the membrane. It localises to the cell projection. The protein localises to the lamellipodium membrane. It is found in the nucleus. The protein resides in the myofibril. Its subcellular location is the sarcomere. It localises to the i band. The protein localises to the cell surface. Its function is as follows. Scaffolding protein that enhances integrin activation mediated by TLN1 and/or TLN2, but activates integrins only weakly by itself. Binds to membranes enriched in phosphoinositides. Enhances integrin-mediated cell adhesion onto the extracellular matrix and cell spreading; this requires both its ability to interact with integrins and with phospholipid membranes. Required for the assembly of focal adhesions. Participates in the connection between extracellular matrix adhesion sites and the actin cytoskeleton and also in the orchestration of actin assembly and cell shape modulation. Plays a role in the TGFB1 and integrin signaling pathways. Stabilizes active CTNNB1 and plays a role in the regulation of transcription mediated by CTNNB1 and TCF7L2/TCF4 and in Wnt signaling. Required for normal embryonic development, including normal heart morphogenesis and normal angiogenesis. This Danio rerio (Zebrafish) protein is Fermitin family homolog 2 (fermt2).